The sequence spans 213 residues: Large ribosomal subunit protein uL1 (213 aa).

It belongs to the universal ribosomal protein uL1 family. In terms of assembly, part of the 50S ribosomal subunit.

Its function is as follows. Binds directly to 23S rRNA. Probably involved in E site tRNA release. Functionally, protein L1 is also a translational repressor protein, it controls the translation of its operon by binding to its mRNA. In Methanococcoides burtonii (strain DSM 6242 / NBRC 107633 / OCM 468 / ACE-M), this protein is Large ribosomal subunit protein uL1.